A 558-amino-acid polypeptide reads, in one-letter code: V-set and immunoglobulin domain-containing protein 10 (558 aa).

The N-terminal stretch at 1–20 (MAGLRVLLCLGALLARQGSA) is a signal peptide. The Extracellular portion of the chain corresponds to 21–426 (GLQLLLNPSR…IWLSVKEPLN (406 aa)). Asparagine 32, asparagine 60, asparagine 121, asparagine 150, asparagine 159, and asparagine 218 each carry an N-linked (GlcNAc...) asparagine glycan. Ig-like C2-type domains are found at residues 37-140 (PNSE…RLRV), 144-235 (PAYV…RKVT), 248-327 (PQCS…VKLS), and 332-420 (PSQP…IWLS). A disulfide bridge connects residues cysteine 65 and cysteine 124. 2 cysteine pairs are disulfide-bonded: cysteine 174–cysteine 221 and cysteine 265–cysteine 308. Asparagine 344 is a glycosylation site (N-linked (GlcNAc...) asparagine). Residues cysteine 349 and cysteine 404 are joined by a disulfide bond. A helical membrane pass occupies residues 427 to 447 (IGGIVGTVVSLLLLGLAVVSG). Residues 448-558 (LTLYYSPAFW…GIVQEDGKPV (111 aa)) are Cytoplasmic-facing. Positions 477 to 506 (DSEEEEEEEEEEEEKEDVAEEVEQETNETE) are enriched in acidic residues. Disordered stretches follow at residues 477 to 515 (DSEE…ISKH) and 532 to 558 (MGNG…GKPV).

Its subcellular location is the membrane. The chain is V-set and immunoglobulin domain-containing protein 10 (Vsig10) from Mus musculus (Mouse).